The chain runs to 527 residues: Berberine bridge enzyme-like 8 (527 aa).

Positions 1 to 20 (MKYALILVLFFVVFIWQSSS) are cleaved as a signal peptide. A disulfide bridge connects residues Cys-31 and Cys-93. Residues Asn-51 and Asn-68 are each glycosylated (N-linked (GlcNAc...) asparagine). An FAD-binding PCMH-type domain is found at 71-247 (STPKPFLIIA…LAYKINLVEV (177 aa)). Residues 108–172 (HDYDGLSYVT…KTLAYPAGIC (65 aa)) constitute a cross-link (6-(S-cysteinyl)-8alpha-(pros-histidyl)-FAD (His-Cys)). Residues Asn-250, Asn-263, and Asn-292 are each glycosylated (N-linked (GlcNAc...) asparagine).

The protein belongs to the oxygen-dependent FAD-linked oxidoreductase family. Requires FAD as cofactor. The FAD cofactor is bound via a bicovalent 6-S-cysteinyl, 8alpha-N1-histidyl FAD linkage.

Its subcellular location is the secreted. The protein resides in the cell wall. The polypeptide is Berberine bridge enzyme-like 8 (Arabidopsis thaliana (Mouse-ear cress)).